The chain runs to 296 residues: D-alanine--D-alanine ligase (296 aa).

Positions 103–293 (KEILMHHRMP…FDSFVKRIIE (191 aa)) constitute an ATP-grasp domain. 129 to 180 (ISFPVAVKPSSGGSSIATFKVKSIQELKHAYEEASKYGEVMIEQWVTGKEIT) lines the ATP pocket. Mg(2+) is bound by residues aspartate 247, glutamate 260, and asparagine 262.

The protein belongs to the D-alanine--D-alanine ligase family. Mg(2+) is required as a cofactor. The cofactor is Mn(2+).

It localises to the cytoplasm. The enzyme catalyses 2 D-alanine + ATP = D-alanyl-D-alanine + ADP + phosphate + H(+). The protein operates within cell wall biogenesis; peptidoglycan biosynthesis. Cell wall formation. This Francisella tularensis subsp. novicida (strain U112) protein is D-alanine--D-alanine ligase.